We begin with the raw amino-acid sequence, 558 residues long: 5-aminolevulinate synthase, mitochondrial (558 aa).

The N-terminal 25 residues, 1–25, are a transit peptide targeting the mitochondrion; that stretch reads MERVVKLAAKHCPFVSKADPSALRR. The segment at 103 to 124 is disordered; it reads TTTPVTKKHQMPKHYASDLNGV. Residues Arg-152, Ser-265, and Lys-284 each coordinate substrate. 3 residues coordinate pyridoxal 5'-phosphate: Ser-317, His-345, and Thr-374. Lys-377 is a catalytic residue. An N6-(pyridoxal phosphate)lysine modification is found at Lys-377. Pyridoxal 5'-phosphate-binding residues include Thr-406 and Thr-407. Thr-492 serves as a coordination point for substrate.

This sequence belongs to the class-II pyridoxal-phosphate-dependent aminotransferase family. As to quaternary structure, homodimer. It depends on pyridoxal 5'-phosphate as a cofactor.

It localises to the mitochondrion matrix. It carries out the reaction succinyl-CoA + glycine + H(+) = 5-aminolevulinate + CO2 + CoA. The protein operates within porphyrin-containing compound metabolism; protoporphyrin-IX biosynthesis; 5-aminolevulinate from glycine: step 1/1. In terms of biological role, catalyzes the synthesis of 5-aminolevulinate (ALA) from succinyl-CoA and glycine, the first and rate-limiting step in heme biosynthesis. This chain is 5-aminolevulinate synthase, mitochondrial, found in Schizosaccharomyces pombe (strain 972 / ATCC 24843) (Fission yeast).